The following is a 491-amino-acid chain: Cyclin-B1-5 (491 aa).

Residues 275 to 347 (DMYSFYKEVE…VKAVPKRELQ (73 aa)) form the Cyclin N-terminal domain.

It belongs to the cyclin family. Cyclin AB subfamily. Expressed in roots, stems and flowers.

This is Cyclin-B1-5 (CYCB1-5) from Arabidopsis thaliana (Mouse-ear cress).